Reading from the N-terminus, the 235-residue chain is Ribitol-5-phosphate cytidylyltransferase (235 aa).

CTP-binding positions include 7-10, 82-88, and Ser-113; these read LAGG and GADRNTS.

It belongs to the IspD/TarI cytidylyltransferase family. TarI subfamily.

It catalyses the reaction D-ribitol 5-phosphate + CTP + H(+) = CDP-L-ribitol + diphosphate. It functions in the pathway cell wall biogenesis; poly(ribitol phosphate) teichoic acid biosynthesis. In terms of biological role, catalyzes the transfer of the cytidylyl group of CTP to D-ribitol 5-phosphate. The polypeptide is Ribitol-5-phosphate cytidylyltransferase (Streptococcus pneumoniae serotype 2 (strain D39 / NCTC 7466)).